A 511-amino-acid chain; its full sequence is Bifunctional purine biosynthesis protein PurH (511 aa).

The 147-residue stretch at 1 to 147 folds into the MGS-like domain; it reads MIQIKRALIS…KNYKHTLVLT (147 aa).

It belongs to the PurH family.

The catalysed reaction is (6R)-10-formyltetrahydrofolate + 5-amino-1-(5-phospho-beta-D-ribosyl)imidazole-4-carboxamide = 5-formamido-1-(5-phospho-D-ribosyl)imidazole-4-carboxamide + (6S)-5,6,7,8-tetrahydrofolate. The enzyme catalyses IMP + H2O = 5-formamido-1-(5-phospho-D-ribosyl)imidazole-4-carboxamide. Its pathway is purine metabolism; IMP biosynthesis via de novo pathway; 5-formamido-1-(5-phospho-D-ribosyl)imidazole-4-carboxamide from 5-amino-1-(5-phospho-D-ribosyl)imidazole-4-carboxamide (10-formyl THF route): step 1/1. It participates in purine metabolism; IMP biosynthesis via de novo pathway; IMP from 5-formamido-1-(5-phospho-D-ribosyl)imidazole-4-carboxamide: step 1/1. The protein is Bifunctional purine biosynthesis protein PurH of Leptospira interrogans serogroup Icterohaemorrhagiae serovar Lai (strain 56601).